We begin with the raw amino-acid sequence, 32 residues long: Cytochrome b6-f complex subunit 7 (32 aa).

Residues 9 to 27 form a helical membrane-spanning segment; sequence AAVFWILIPIGLVGGALLL.

It belongs to the PetM family. In terms of assembly, the 4 large subunits of the cytochrome b6-f complex are cytochrome b6, subunit IV (17 kDa polypeptide, PetD), cytochrome f and the Rieske protein, while the 4 small subunits are PetG, PetL, PetM and PetN. The complex functions as a dimer.

Its subcellular location is the cellular thylakoid membrane. Component of the cytochrome b6-f complex, which mediates electron transfer between photosystem II (PSII) and photosystem I (PSI), cyclic electron flow around PSI, and state transitions. In Prochlorococcus marinus (strain MIT 9301), this protein is Cytochrome b6-f complex subunit 7.